Reading from the N-terminus, the 154-residue chain is Cyanate hydratase (154 aa).

Catalysis depends on residues Arg-100, Glu-103, and Ser-126.

Belongs to the cyanase family.

It catalyses the reaction cyanate + hydrogencarbonate + 3 H(+) = NH4(+) + 2 CO2. In terms of biological role, catalyzes the reaction of cyanate with bicarbonate to produce ammonia and carbon dioxide. In Aspergillus fumigatus (strain CBS 144.89 / FGSC A1163 / CEA10) (Neosartorya fumigata), this protein is Cyanate hydratase.